The following is a 262-amino-acid chain: Cytochrome c oxidase subunit 3 (262 aa).

7 helical membrane passes run 13–33 (PWPLLASFAAFLSTTGGVMYM), 38–58 (GGGLLLAIGQLSLFYVMYVWW), 82–102 (GMLLFILSEIMFFFAFFWAFF), 134–154 (TIILLTSGASVTWAHHAILAG), 159–179 (GIISLAITVLLAVIFTGFQAL), 200–220 (ATGFHGFHVIIGTIFIAVCLF), and 237–257 (AAAWYWHMVDVVWLFLFVCIY).

This sequence belongs to the cytochrome c oxidase subunit 3 family. As to quaternary structure, component of the cytochrome c oxidase (complex IV, CIV), a multisubunit enzyme composed of a catalytic core of 3 subunits and several supernumerary subunits. The complex exists as a monomer or a dimer and forms supercomplexes (SCs) in the inner mitochondrial membrane with ubiquinol-cytochrome c oxidoreductase (cytochrome b-c1 complex, complex III, CIII).

It is found in the mitochondrion inner membrane. It catalyses the reaction 4 Fe(II)-[cytochrome c] + O2 + 8 H(+)(in) = 4 Fe(III)-[cytochrome c] + 2 H2O + 4 H(+)(out). Functionally, component of the cytochrome c oxidase, the last enzyme in the mitochondrial electron transport chain which drives oxidative phosphorylation. The respiratory chain contains 3 multisubunit complexes succinate dehydrogenase (complex II, CII), ubiquinol-cytochrome c oxidoreductase (cytochrome b-c1 complex, complex III, CIII) and cytochrome c oxidase (complex IV, CIV), that cooperate to transfer electrons derived from NADH and succinate to molecular oxygen, creating an electrochemical gradient over the inner membrane that drives transmembrane transport and the ATP synthase. Cytochrome c oxidase is the component of the respiratory chain that catalyzes the reduction of oxygen to water. Electrons originating from reduced cytochrome c in the intermembrane space (IMS) are transferred via the dinuclear copper A center (CU(A)) of subunit 2 and heme A of subunit 1 to the active site in subunit 1, a binuclear center (BNC) formed by heme A3 and copper B (CU(B)). The BNC reduces molecular oxygen to 2 water molecules using 4 electrons from cytochrome c in the IMS and 4 protons from the mitochondrial matrix. The polypeptide is Cytochrome c oxidase subunit 3 (COX3) (Prototheca wickerhamii).